Here is a 315-residue protein sequence, read N- to C-terminus: L-lactate dehydrogenase (315 aa).

NAD(+) is bound by residues Val14, Asp35, and Tyr66. Residues Gln83, Arg89, and Asn121 to Asp124 contribute to the substrate site. NAD(+)-binding positions include Val119 to Asn121 and Ser144. Asp149–Arg152 contributes to the substrate binding site. His176 acts as the Proton acceptor in catalysis. A Phosphotyrosine modification is found at Tyr221. Thr230 is a substrate binding site.

It belongs to the LDH/MDH superfamily. LDH family. In terms of assembly, homotetramer.

It localises to the cytoplasm. The catalysed reaction is (S)-lactate + NAD(+) = pyruvate + NADH + H(+). The protein operates within fermentation; pyruvate fermentation to lactate; (S)-lactate from pyruvate: step 1/1. Functionally, catalyzes the conversion of lactate to pyruvate. This chain is L-lactate dehydrogenase, found in Mesomycoplasma hyopneumoniae (strain 7448) (Mycoplasma hyopneumoniae).